The sequence spans 504 residues: Tegument protein VP16 homolog (504 aa).

Disordered regions lie at residues 354–381 (EAGG…RLQR), 395–421 (ATPR…QGRR), and 435–486 (RSGP…ANPF). Residues 361-378 (RSGSTRTRGRAARSTTGR) are compositionally biased toward low complexity. Residues 447–460 (PVRSGLGLSRARGS) show a composition bias toward low complexity.

Belongs to the herpesviridae tegument protein VP16 protein family. In terms of assembly, associates with the VP16-induced complex; binding to host HCFC1 activates VP16 for association with the octamer motif-binding host protein POU2F1, to form a multiprotein-DNA complex responsible for activating transcription of the viral immediate early genes.

The protein localises to the virion tegument. It localises to the host nucleus. Functionally, transcriptional activator of immediate-early (IE) gene products (alpha genes). Acts as a key activator of lytic infection by initiating the lytic program through the assembly of the transcriptional regulatory VP16-induced complex composed of VP16 and two cellular factors, HCFC1 and POU2F1. VP16-induced complex represents a regulatory switch: when it is on, it promotes IE-gene expression and thus lytic infection, and when it is off, it limits IE-gene transcription favoring latent infection. May play a role in the aggregation of tegument proteins around nucleocapsids during virus morphogenesis. The protein is Tegument protein VP16 homolog of Bos taurus (Bovine).